Reading from the N-terminus, the 91-residue chain is Acylphosphatase (91 aa).

The region spanning 5–91 (RLHAIVEGEV…KGEFTSFDTY (87 aa)) is the Acylphosphatase-like domain. Catalysis depends on residues Arg20 and Asn38.

Belongs to the acylphosphatase family.

It catalyses the reaction an acyl phosphate + H2O = a carboxylate + phosphate + H(+). This Metallosphaera sedula (strain ATCC 51363 / DSM 5348 / JCM 9185 / NBRC 15509 / TH2) protein is Acylphosphatase (acyP).